Consider the following 460-residue polypeptide: Bifunctional protein GlmU (460 aa).

The tract at residues 1–229 (MTNYAIILAA…FNESLGVNDR (229 aa)) is pyrophosphorylase. UDP-N-acetyl-alpha-D-glucosamine contacts are provided by residues 8–11 (LAAG), Lys22, Gln72, and 77–78 (GT). Asp102 is a Mg(2+) binding site. Residues Gly139, Glu154, Asn169, and Asn227 each coordinate UDP-N-acetyl-alpha-D-glucosamine. Mg(2+) is bound at residue Asn227. The segment at 230–250 (VALATAETVMRQRITQKHMVN) is linker. An N-acetyltransferase region spans residues 251-460 (GVTFHNPETV…RLAHHPSRSK (210 aa)). Arg332 and Lys350 together coordinate UDP-N-acetyl-alpha-D-glucosamine. His362 functions as the Proton acceptor in the catalytic mechanism. Residues Tyr365 and Asn376 each coordinate UDP-N-acetyl-alpha-D-glucosamine. Residues Ala379, 385-386 (NY), Ser404, Ala422, and Arg439 contribute to the acetyl-CoA site.

The protein in the N-terminal section; belongs to the N-acetylglucosamine-1-phosphate uridyltransferase family. In the C-terminal section; belongs to the transferase hexapeptide repeat family. In terms of assembly, homotrimer. The cofactor is Mg(2+).

The protein localises to the cytoplasm. It carries out the reaction alpha-D-glucosamine 1-phosphate + acetyl-CoA = N-acetyl-alpha-D-glucosamine 1-phosphate + CoA + H(+). It catalyses the reaction N-acetyl-alpha-D-glucosamine 1-phosphate + UTP + H(+) = UDP-N-acetyl-alpha-D-glucosamine + diphosphate. The protein operates within nucleotide-sugar biosynthesis; UDP-N-acetyl-alpha-D-glucosamine biosynthesis; N-acetyl-alpha-D-glucosamine 1-phosphate from alpha-D-glucosamine 6-phosphate (route II): step 2/2. It functions in the pathway nucleotide-sugar biosynthesis; UDP-N-acetyl-alpha-D-glucosamine biosynthesis; UDP-N-acetyl-alpha-D-glucosamine from N-acetyl-alpha-D-glucosamine 1-phosphate: step 1/1. It participates in bacterial outer membrane biogenesis; LPS lipid A biosynthesis. Catalyzes the last two sequential reactions in the de novo biosynthetic pathway for UDP-N-acetylglucosamine (UDP-GlcNAc). The C-terminal domain catalyzes the transfer of acetyl group from acetyl coenzyme A to glucosamine-1-phosphate (GlcN-1-P) to produce N-acetylglucosamine-1-phosphate (GlcNAc-1-P), which is converted into UDP-GlcNAc by the transfer of uridine 5-monophosphate (from uridine 5-triphosphate), a reaction catalyzed by the N-terminal domain. This is Bifunctional protein GlmU from Streptococcus pyogenes serotype M49 (strain NZ131).